The primary structure comprises 91 residues: Acylphosphatase (91 aa).

Residues Cys5–Arg91 enclose the Acylphosphatase-like domain. Active-site residues include Arg20 and Asn38.

This sequence belongs to the acylphosphatase family.

It carries out the reaction an acyl phosphate + H2O = a carboxylate + phosphate + H(+). The chain is Acylphosphatase (acyP) from Pseudomonas aeruginosa (strain ATCC 15692 / DSM 22644 / CIP 104116 / JCM 14847 / LMG 12228 / 1C / PRS 101 / PAO1).